The sequence spans 313 residues: Porphobilinogen deaminase (313 aa).

S-(dipyrrolylmethanemethyl)cysteine is present on cysteine 242.

The protein belongs to the HMBS family. In terms of assembly, monomer. Requires dipyrromethane as cofactor.

It carries out the reaction 4 porphobilinogen + H2O = hydroxymethylbilane + 4 NH4(+). It participates in porphyrin-containing compound metabolism; protoporphyrin-IX biosynthesis; coproporphyrinogen-III from 5-aminolevulinate: step 2/4. Its function is as follows. Tetrapolymerization of the monopyrrole PBG into the hydroxymethylbilane pre-uroporphyrinogen in several discrete steps. This is Porphobilinogen deaminase from Pseudomonas aeruginosa (strain UCBPP-PA14).